We begin with the raw amino-acid sequence, 214 residues long: Octanoyltransferase (214 aa).

In terms of domain architecture, BPL/LPL catalytic spans 32-207 (EDTLDEIWLV…NLLALLNHPP (176 aa)). Substrate is bound by residues 71 to 78 (RGGQVTYH), 138 to 140 (SLG), and 151 to 153 (GLA). C169 serves as the catalytic Acyl-thioester intermediate.

Belongs to the LipB family.

The protein localises to the cytoplasm. The catalysed reaction is octanoyl-[ACP] + L-lysyl-[protein] = N(6)-octanoyl-L-lysyl-[protein] + holo-[ACP] + H(+). It functions in the pathway protein modification; protein lipoylation via endogenous pathway; protein N(6)-(lipoyl)lysine from octanoyl-[acyl-carrier-protein]: step 1/2. In terms of biological role, catalyzes the transfer of endogenously produced octanoic acid from octanoyl-acyl-carrier-protein onto the lipoyl domains of lipoate-dependent enzymes. Lipoyl-ACP can also act as a substrate although octanoyl-ACP is likely to be the physiological substrate. The sequence is that of Octanoyltransferase from Klebsiella pneumoniae subsp. pneumoniae (strain ATCC 700721 / MGH 78578).